Here is a 194-residue protein sequence, read N- to C-terminus: MTELVLILVGAILVNNFVLVQFLGLCPFMGVSKRIETAIGLALATTFVLTLAAMCSYLLQRYVLVPLDLEYLRTIGFILVIAVVVQFTEMLVNKTSPLLYRVLGIFLPLITTNCIVLGVALLNANKAGYGFLESGINGFGAGLGFSLVLVLFAAMRERIAIADVPKPFKGAAIGLITAGLMSLAFMGFSGLIKP.

Transmembrane regions (helical) follow at residues 4-24 (LVLI…QFLG), 39-59 (IGLA…SYLL), 72-92 (LRTI…EMLV), 102-122 (VLGI…VALL), 135-155 (GING…FAAM), and 172-192 (AIGL…SGLI).

Belongs to the NqrDE/RnfAE family. As to quaternary structure, the complex is composed of six subunits: RnfA, RnfB, RnfC, RnfD, RnfE and RnfG.

The protein localises to the cell inner membrane. Part of a membrane-bound complex that couples electron transfer with translocation of ions across the membrane. In Azotobacter vinelandii (strain DJ / ATCC BAA-1303), this protein is Ion-translocating oxidoreductase complex subunit A.